The primary structure comprises 139 residues: Acyl carrier protein 5, chloroplastic (139 aa).

The N-terminal 54 residues, 1–54 (MATSFCSSISMQAPFSATTTRFCLNKQATIFNNEKTNNLSFSLRRLMPARLAVS), are a transit peptide targeting the chloroplast. Residues 59-134 (QETVEKVSEI…QAAELIEELV (76 aa)) enclose the Carrier domain. An O-(pantetheine 4'-phosphoryl)serine modification is found at Ser94.

It belongs to the acyl carrier protein (ACP) family. 4'-phosphopantetheine is transferred from CoA to a specific serine of apo-ACP by acpS. This modification is essential for activity because fatty acids are bound in thioester linkage to the sulfhydryl of the prosthetic group.

It localises to the plastid. The protein localises to the chloroplast. In terms of biological role, carrier of the growing fatty acid chain in fatty acid biosynthesis. This Arabidopsis thaliana (Mouse-ear cress) protein is Acyl carrier protein 5, chloroplastic (ACP5).